A 621-amino-acid polypeptide reads, in one-letter code: MLLLPSAADGQGTAITHALTSASTLCQVEPVGRWFEAFVKRRNRNASASFQELEDKKELSEESEDEELQLEEFPMLKTLDPKDWKNQDHYAVLGLGHVRYKATQRQIKAAHKAMVLKHHPDKRKAAGEPIKEGDNDYFTCITKAYEMLSDPVKRRAFNSVDPTFDNSVPSKSEAKDNFFEVFSPVFERNSRWSNKKNVPKLGDMNSSFEDVDAFYSFWYNFDSWREFSYLDEEEKEKAECRDERRWIEKQNRATRAQRKKEEMNRIRTLVDNAYSCDPRIKKFKEEEKAKKEAEKKAKADAKRKEQEAKEKQRQAELEAARLAKEKEEEEVRQQALLAKKEKDIQKKAIKKERQKLRNLCKTWNHFSDSEAERVKMMEEVEKLCDRLELSSLQCLNETLTSSTKEVGKAALEKQIEEINEQIRKEKEEAEARMRQASKNAEKSAGGGGNGSKHWSEDDLQLLIKAVNLFPAGTNSRWEVIANYMNIHSSSGVKRTAKDVIGKAKSLQKLDPHQKDDINKKAFDKFKKEHGVVPQADNATPSERFEGPCTDFTPWTTEEQKLLEQALKTYPVNTPERWEKIAEAVPGRTKKDCMKRYKELVEMVKAKKAAQEQVLNASRGKK.

Position 1 is an N-acetylmethionine (Met-1). Ser-47, Ser-49, Ser-60, and Ser-63 each carry phosphoserine. A J domain is found at 88-161 (DHYAVLGLGH…VKRRAFNSVD (74 aa)). The interval 160–250 (VDPTFDNSVP…RDERRWIEKQ (91 aa)) is ZRF1-UBD. Phosphoserine is present on Ser-183. 2 disordered regions span residues 294–315 (EKKAKADAKRKEQEAKEKQRQA) and 426–453 (KEEAEARMRQASKNAEKSAGGGGNGSKH). SANT domains are found at residues 449–511 (NGSK…KLDP) and 549–604 (TDFT…EMVK).

As to quaternary structure, component of ribosome-associated complex (RAC), a heterodimer composed of Hsp70/DnaK-type chaperone HSPA14 and Hsp40/DnaJ-type chaperone DNAJC2. Interacts (via ZRF1-UBD region) with ID1. Post-translationally, phosphorylated in M (mitotic) phase.

The protein localises to the nucleus. It is found in the cytoplasm. The protein resides in the cytosol. Acts both as a chaperone in the cytosol and as a chromatin regulator in the nucleus. When cytosolic, acts as a molecular chaperone: component of the ribosome-associated complex (RAC), a complex involved in folding or maintaining nascent polypeptides in a folding-competent state. In the RAC complex, stimulates the ATPase activity of the ribosome-associated pool of Hsp70-type chaperones HSPA14 that bind to the nascent polypeptide chain. When nuclear, mediates the switching from polycomb-repressed genes to an active state: specifically recruited at histone H2A ubiquitinated at 'Lys-119' (H2AK119ub), and promotes the displacement of the polycomb PRC1 complex from chromatin, thereby facilitating transcription activation. The chain is DnaJ homolog subfamily C member 2 (DNAJC2) from Bos taurus (Bovine).